A 203-amino-acid polypeptide reads, in one-letter code: MMTAVAIRPERLRDHIAAALGARLRQITLALEEVTVVLAAADYFDAMRVLRDDPVCRFEQLIDLCAVDYSTYADAVQQGPRYCVVAHLLSVSLNQRLRVKVFCPDDDFPLLPSVCGLWNSANWYEREAFDLFGILFDGHDDLRRILTDYGFIGHPFRKDFPLSGHVQMRYDAELRRVVYEPVSIEPREITPRIIREDHYADPH.

It belongs to the complex I 30 kDa subunit family. In terms of assembly, NDH-1 is composed of 14 different subunits. Subunits NuoB, C, D, E, F, and G constitute the peripheral sector of the complex.

Its subcellular location is the cell inner membrane. The catalysed reaction is a quinone + NADH + 5 H(+)(in) = a quinol + NAD(+) + 4 H(+)(out). In terms of biological role, NDH-1 shuttles electrons from NADH, via FMN and iron-sulfur (Fe-S) centers, to quinones in the respiratory chain. The immediate electron acceptor for the enzyme in this species is believed to be ubiquinone. Couples the redox reaction to proton translocation (for every two electrons transferred, four hydrogen ions are translocated across the cytoplasmic membrane), and thus conserves the redox energy in a proton gradient. In Verminephrobacter eiseniae (strain EF01-2), this protein is NADH-quinone oxidoreductase subunit C.